Here is a 406-residue protein sequence, read N- to C-terminus: 4-hydroxy-3-methylbut-2-enyl diphosphate reductase (406 aa).

Cys-66 provides a ligand contact to [4Fe-4S] cluster. His-96 contributes to the (2E)-4-hydroxy-3-methylbut-2-enyl diphosphate binding site. Position 96 (His-96) interacts with dimethylallyl diphosphate. Residue His-96 coordinates isopentenyl diphosphate. Position 157 (Cys-157) interacts with [4Fe-4S] cluster. His-185 provides a ligand contact to (2E)-4-hydroxy-3-methylbut-2-enyl diphosphate. His-185 contributes to the dimethylallyl diphosphate binding site. His-185 is an isopentenyl diphosphate binding site. Glu-187 functions as the Proton donor in the catalytic mechanism. Position 250 (Thr-250) interacts with (2E)-4-hydroxy-3-methylbut-2-enyl diphosphate. Cys-288 contributes to the [4Fe-4S] cluster binding site. (2E)-4-hydroxy-3-methylbut-2-enyl diphosphate is bound by residues Ser-317, Ser-318, Asn-319, and Ser-379. Ser-317, Ser-318, Asn-319, and Ser-379 together coordinate dimethylallyl diphosphate. Residues Ser-317, Ser-318, Asn-319, and Ser-379 each contribute to the isopentenyl diphosphate site.

Belongs to the IspH family. [4Fe-4S] cluster is required as a cofactor.

It catalyses the reaction isopentenyl diphosphate + 2 oxidized [2Fe-2S]-[ferredoxin] + H2O = (2E)-4-hydroxy-3-methylbut-2-enyl diphosphate + 2 reduced [2Fe-2S]-[ferredoxin] + 2 H(+). The enzyme catalyses dimethylallyl diphosphate + 2 oxidized [2Fe-2S]-[ferredoxin] + H2O = (2E)-4-hydroxy-3-methylbut-2-enyl diphosphate + 2 reduced [2Fe-2S]-[ferredoxin] + 2 H(+). The protein operates within isoprenoid biosynthesis; dimethylallyl diphosphate biosynthesis; dimethylallyl diphosphate from (2E)-4-hydroxy-3-methylbutenyl diphosphate: step 1/1. Its pathway is isoprenoid biosynthesis; isopentenyl diphosphate biosynthesis via DXP pathway; isopentenyl diphosphate from 1-deoxy-D-xylulose 5-phosphate: step 6/6. Catalyzes the conversion of 1-hydroxy-2-methyl-2-(E)-butenyl 4-diphosphate (HMBPP) into a mixture of isopentenyl diphosphate (IPP) and dimethylallyl diphosphate (DMAPP). Acts in the terminal step of the DOXP/MEP pathway for isoprenoid precursor biosynthesis. This is 4-hydroxy-3-methylbut-2-enyl diphosphate reductase from Synechococcus sp. (strain RCC307).